The primary structure comprises 314 residues: L-lactate dehydrogenase 1 (314 aa).

Residues Val-16, Asp-37, Lys-42, Tyr-68, and 82–83 (GL) each bind NAD(+). Substrate is bound by residues Gln-85, Arg-91, and 123-126 (NPVD). NAD(+)-binding positions include 121–123 (ATN) and Ser-146. 151–154 (DSAR) is a substrate binding site. Residues Arg-156 and His-171 each coordinate beta-D-fructose 1,6-bisphosphate. His-178 serves as the catalytic Proton acceptor. Tyr-223 carries the post-translational modification Phosphotyrosine. Substrate is bound at residue Thr-232.

Belongs to the LDH/MDH superfamily. LDH family. As to quaternary structure, homotetramer.

It localises to the cytoplasm. The catalysed reaction is (S)-lactate + NAD(+) = pyruvate + NADH + H(+). It participates in fermentation; pyruvate fermentation to lactate; (S)-lactate from pyruvate: step 1/1. With respect to regulation, allosterically activated by fructose 1,6-bisphosphate (FBP). In terms of biological role, catalyzes the conversion of lactate to pyruvate. In Bacillus cereus (strain ATCC 14579 / DSM 31 / CCUG 7414 / JCM 2152 / NBRC 15305 / NCIMB 9373 / NCTC 2599 / NRRL B-3711), this protein is L-lactate dehydrogenase 1.